A 232-amino-acid chain; its full sequence is Glutathione-specific gamma-glutamylcyclotransferase (232 aa).

Substrate is bound at residue 10 to 15 (VLGYGS). Glu-115 acts as the Proton acceptor in catalysis.

It belongs to the gamma-glutamylcyclotransferase family. ChaC subfamily.

The protein localises to the cytoplasm. It localises to the nucleus. It carries out the reaction glutathione = L-cysteinylglycine + 5-oxo-L-proline. Functionally, catalyzes the cleavage of glutathione into 5-oxo-L-proline and a Cys-Gly dipeptide. Acts specifically on glutathione, but not on other gamma-glutamyl peptides. Allows utilization of gluthathione through subsequent cleavage of the Cys-Gly dipeptide by Cys-Gly metallodipeptidase DUG1. In Saccharomyces cerevisiae (strain ATCC 204508 / S288c) (Baker's yeast), this protein is Glutathione-specific gamma-glutamylcyclotransferase.